Reading from the N-terminus, the 503-residue chain is Basic immunoglobulin-like variable motif-containing protein (503 aa).

Residues M1–E26 show a composition bias toward basic and acidic residues. Disordered regions lie at residues M1 to V33, T152 to Q184, and E438 to F469. Residues S155 to S172 show a composition bias toward basic residues. Over residues D173–Q184 the composition is skewed to basic and acidic residues.

Belongs to the BIVM family. As to expression, widely expressed. Expressed at higher level in spleen, ovary, small intestine, colon, peripheral blood leukocytes and liver. Also expressed in testis, ovary, aorta, appendix, trachea, pituitary gland, bladder, uterus, spinal cord, salivary gland, stomach, mammary gland and bone marrow. Weakly or not expressed in fetal spleen, adult thymus and certain cancer cell lines.

The protein localises to the cytoplasm. It localises to the nucleus. The protein is Basic immunoglobulin-like variable motif-containing protein (BIVM) of Homo sapiens (Human).